Reading from the N-terminus, the 372-residue chain is MSGPLTERRQMILKLVIQEFVDTATPVASETLVRKYRLPVSSATVRNDMAALEELGFLTHPHTSGGRIPTDAGYRFFVENLMERTTLSPAEQRMIRHQFYQVRGELDQWVQLACAVLARTAHNASVATAPRAEQLRFKSLELIAIHETMALAVIVFHGGIVKQQTLPIEPGRTPEDLRRAAGLVSDLLADATLSRAEELAAIATFNGVPLSEFERTLVDLVVRAMSVFEEQAQEQIYSDGILEMLSQPEFLPASGRDDAERAIERLRRTLEILKSGRGLSPLIPQALASGGVQVIIGGEHSEDTMRDYSVILARYGVEGALVGVLGVIGPTRMAYPRSISTVRYIASLMTNLLADLYHVNTRPSDIEPAAEL.

The protein belongs to the HrcA family.

Negative regulator of class I heat shock genes (grpE-dnaK-dnaJ and groELS operons). Prevents heat-shock induction of these operons. The sequence is that of Heat-inducible transcription repressor HrcA from Chloroflexus aurantiacus (strain ATCC 29366 / DSM 635 / J-10-fl).